Reading from the N-terminus, the 239-residue chain is Tumor necrosis factor ligand superfamily member 14 (239 aa).

The Cytoplasmic segment spans residues 1 to 37 (MESVVQPSVFVVDGQTDIPFRRLEQNHRRRRCGTVQV). Residues 38–58 (SLALVLLLGAGLATQGWFLLR) traverse the membrane as a helical; Signal-anchor for type II membrane protein segment. Topologically, residues 59 to 239 (LHQRLGDIVA…TRSYFGAFMV (181 aa)) are extracellular. Positions 92-239 (PAAHLTGANA…TRSYFGAFMV (148 aa)) constitute a THD domain. Asn-100 carries an N-linked (GlcNAc...) asparagine glycan. A disulfide bond links Cys-152 and Cys-187. Asn-191 carries an N-linked (GlcNAc...) asparagine glycan.

The protein belongs to the tumor necrosis factor family. As to quaternary structure, homotrimer. Interacts with TNFRSF14. In terms of processing, the soluble form derives from the membrane form by proteolytic processing.

The protein localises to the cell membrane. It localises to the secreted. Functionally, cytokine that binds to TNFRSF3/LTBR. Binding to the decoy receptor TNFRSF6B modulates its effects. Activates NFKB and stimulates the proliferation of T-cells. Acts as a ligand for TNFRSF14/HVEM. Upon binding to TNFRSF14/HVEM, delivers costimulatory signals to T cells, leading to T cell proliferation and IFNG production. In Mus musculus (Mouse), this protein is Tumor necrosis factor ligand superfamily member 14 (Tnfsf14).